The chain runs to 505 residues: ATP synthase subunit beta, mitochondrial (505 aa).

The transit peptide at 1–31 (MFALRAASKADKNLLPFLGQLSRSHAAKAAK) directs the protein to the mitochondrion. 183–190 (GGAGVGKT) provides a ligand contact to ATP.

It belongs to the ATPase alpha/beta chains family. In terms of assembly, F-type ATPases have 2 components, CF(1) - the catalytic core - and CF(0) - the membrane proton channel. CF(1) has five subunits: alpha(3), beta(3), gamma(1), delta(1), epsilon(1). CF(0) has three main subunits: a, b and c.

The protein resides in the mitochondrion. It localises to the mitochondrion inner membrane. It catalyses the reaction ATP + H2O + 4 H(+)(in) = ADP + phosphate + 5 H(+)(out). Mitochondrial membrane ATP synthase (F(1)F(0) ATP synthase or Complex V) produces ATP from ADP in the presence of a proton gradient across the membrane which is generated by electron transport complexes of the respiratory chain. F-type ATPases consist of two structural domains, F(1) - containing the extramembraneous catalytic core, and F(0) - containing the membrane proton channel, linked together by a central stalk and a peripheral stalk. During catalysis, ATP synthesis in the catalytic domain of F(1) is coupled via a rotary mechanism of the central stalk subunits to proton translocation. Subunits alpha and beta form the catalytic core in F(1). Rotation of the central stalk against the surrounding alpha(3)beta(3) subunits leads to hydrolysis of ATP in three separate catalytic sites on the beta subunits. This chain is ATP synthase subunit beta, mitochondrial, found in Drosophila melanogaster (Fruit fly).